The primary structure comprises 578 residues: MPSASCDVLLDDIEDIISQEDSKPQDRQFSRKHVFPKVRRRNTQKYLQEEPRPPSDSTIPGIQKIWIRTWGCSHNNSDGEYMAGQLAAYGYKITENASDADLWLLNSCTVKNPAEDHFRNSIKKAQEENKKVVLAGCVPQAQPRQDYLKGLSIIGVQQIDRVVEVVEETIKGHSVRLLGQKKDNGKRLGGARLDLPKIRKNPLIEIISINTGCLNACTYCKTKHARGNLASYPIDELVERAKQSFQEGVCEIWLTSEDTGAYGRDIGTDLPTLLWKLVEVIPEGAMLRLGMTNPPYILEHLEEMAKILNHPRVYAFLHIPVQSASDSVLMDMKREYCVADFKRVVDFLKEKVPGITIATDIICGFPGETDQDFQETVKLVEEYKFPSLFINQFYPRPGTPAAKAEQVPAHVKKQRTKDLSRVFHSYNPYDHKIGERQQVLVTEESFDSKFYVAHNRFYEQVLVPKNPAFMGKMVEVDIYESGKHFLKGQPVSETRVYTPSISKPLAKGEVSGLTKEFRNRLGNHPNGTSDTCPATQHGSAYSRMVLQMSQYDCALKVATGLALLALLLHFWPDSLLTM.

The 109-residue stretch at 63 to 171 (QKIWIRTWGC…VVEVVEETIK (109 aa)) folds into the MTTase N-terminal domain. C72 and C108 together coordinate [4Fe-4S] cluster. S121 is subject to Phosphoserine. [4Fe-4S] cluster is bound by residues C137, C213, C217, and C220. Positions 199–430 (RKNPLIEIIS…RVFHSYNPYD (232 aa)) constitute a Radical SAM core domain. The 63-residue stretch at 430–492 (DHKIGERQQV…KHFLKGQPVS (63 aa)) folds into the TRAM domain. Residue T498 is modified to Phosphothreonine. A helical membrane pass occupies residues 553–570 (CALKVATGLALLALLLHF).

Belongs to the methylthiotransferase family. CDKAL1 subfamily. [4Fe-4S] cluster serves as cofactor. In terms of tissue distribution, expressed in pancreas, liver and skeletal muscle, especially in white muscle fibers.

It is found in the endoplasmic reticulum membrane. The enzyme catalyses N(6)-L-threonylcarbamoyladenosine(37) in tRNA + (sulfur carrier)-SH + AH2 + 2 S-adenosyl-L-methionine = 2-methylsulfanyl-N(6)-L-threonylcarbamoyladenosine(37) in tRNA + (sulfur carrier)-H + 5'-deoxyadenosine + L-methionine + A + S-adenosyl-L-homocysteine + 2 H(+). Its function is as follows. Catalyzes the methylthiolation of N6-threonylcarbamoyladenosine (t(6)A), leading to the formation of 2-methylthio-N6-threonylcarbamoyladenosine (ms(2)t(6)A) at position 37 in tRNAs that read codons beginning with adenine. The polypeptide is Threonylcarbamoyladenosine tRNA methylthiotransferase (Cdkal1) (Mus musculus (Mouse)).